Reading from the N-terminus, the 149-residue chain is MTPKVTIYTDGACKGNPGPGGWGAILFYGDKKKEICGGEPGTTNNRMELMAAIQALELLNRPCVVELHTDSQYVMKGIQEWIRGWKARGWKTADKSPVKNDDLWKRLDAARARHDVDWRWVKGHAGHPLNERADALANEGLRQANPRVI.

Residues 1 to 142 (MTPKVTIYTD…ADALANEGLR (142 aa)) enclose the RNase H type-1 domain. 4 residues coordinate Mg(2+): D10, E48, D70, and D134.

The protein belongs to the RNase H family. In terms of assembly, monomer. Mg(2+) is required as a cofactor.

It is found in the cytoplasm. The catalysed reaction is Endonucleolytic cleavage to 5'-phosphomonoester.. In terms of biological role, endonuclease that specifically degrades the RNA of RNA-DNA hybrids. This is Ribonuclease HI from Caulobacter vibrioides (strain ATCC 19089 / CIP 103742 / CB 15) (Caulobacter crescentus).